The primary structure comprises 161 residues: Cytochrome c-type biogenesis protein CcmE (161 aa).

The Cytoplasmic segment spans residues 1-8 (MNPRRQKR). The chain crosses the membrane as a helical; Signal-anchor for type II membrane protein span at residues 9-29 (LGIILAILIGVSATIGLMIYA). At 30 to 161 (LNQNMDLFYT…SEEQKQGSGQ (132 aa)) the chain is on the periplasmic side. The heme site is built by histidine 129 and tyrosine 133.

Belongs to the CcmE/CycJ family.

It localises to the cell inner membrane. Its function is as follows. Heme chaperone required for the biogenesis of c-type cytochromes. Transiently binds heme delivered by CcmC and transfers the heme to apo-cytochromes in a process facilitated by CcmF and CcmH. This is Cytochrome c-type biogenesis protein CcmE from Vibrio vulnificus (strain CMCP6).